Reading from the N-terminus, the 758-residue chain is Vitamin K-dependent gamma-carboxylase (758 aa).

A disordered region spans residues 1-34; that stretch reads MAVSARPARAPRGPDKVKKDKAAQTSGPRQGSQM. A2 is subject to N-acetylalanine. Topologically, residues 2–60 are cytoplasmic; the sequence is AVSARPARAPRGPDKVKKDKAAQTSGPRQGSQMGKLLGFEWTDVSSWERLVTLLNRPTD. The segment covering 12–22 has biased composition (basic and acidic residues); sequence RGPDKVKKDKA. The segment covering 23-33 has biased composition (polar residues); that stretch reads AQTSGPRQGSQ. Residues 61–81 form a helical membrane-spanning segment; the sequence is PASLAVFRFLFGLMMVLDIPQ. The Lumenal portion of the chain corresponds to 82 to 113; the sequence is ERGLSSLDRRYLDGLEVCRFPLLDALQPLPLD. The cysteines at positions 99 and 450 are disulfide-linked. A helical membrane pass occupies residues 114–134; that stretch reads WMYLVYTIMFLGALGMMLGLC. Over 135-136 the chain is Cytoplasmic; it reads YR. The helical transmembrane segment at 137-157 threads the bilayer; the sequence is ISCVLFLLPYWYVFLLDKTSW. Residues 158–292 lie on the Lumenal side of the membrane; the sequence is NNHSYLYGLL…VSYFHCMNSQ (135 aa). Residues 293-313 form a helical membrane-spanning segment; that stretch reads LFSIGMFPYVMLASSPLFCSP. Residues 314 to 361 lie on the Cytoplasmic side of the membrane; it reads EWPRKLVAHCPKKLQELLPLRTAPQPSTSCMYKRSRARGSQKPGLRHQ. The helical transmembrane segment at 362-382 threads the bilayer; the sequence is LSTAFTLLYLLEQLFLPYSHF. The Lumenal portion of the chain corresponds to 383-758; it reads LTQGYNNWTN…PDSHPVHSEF (376 aa). The segment at 726 to 758 is disordered; it reads RPFEPAGEPSPVNTDSSNPNPPEPDSHPVHSEF. Residues 749–758 show a composition bias toward basic and acidic residues; that stretch reads PDSHPVHSEF.

The protein belongs to the vitamin K-dependent gamma-carboxylase family. In terms of assembly, monomer. May interact with CALU.

The protein resides in the endoplasmic reticulum membrane. It carries out the reaction 4-carboxy-L-glutamyl-[protein] + 2,3-epoxyphylloquinone + H2O + H(+) = phylloquinol + L-glutamyl-[protein] + CO2 + O2. Functionally, mediates the vitamin K-dependent carboxylation of glutamate residues to calcium-binding gamma-carboxyglutamate (Gla) residues with the concomitant conversion of the reduced hydroquinone form of vitamin K to vitamin K epoxide. Catalyzes gamma-carboxylation of various proteins, such as blood coagulation factors (F2, F7, F9 and F10), osteocalcin (BGLAP) or matrix Gla protein (MGP). In Ovis aries (Sheep), this protein is Vitamin K-dependent gamma-carboxylase (GGCX).